The sequence spans 338 residues: Malate dehydrogenase, mitochondrial (338 aa).

A mitochondrion-targeting transit peptide spans 1 to 24 (MLSALARPASAALRRSFSTSAQNN). Residues 31-37 (GASGGIG) and Asp-57 each bind NAD(+). Ser-33 is a glycosylation site (O-linked (GlcNAc) serine). 2 positions are modified to N6-acetyllysine; alternate: Lys-78 and Lys-91. An N6-succinyllysine; alternate mark is found at Lys-78 and Lys-91. The substrate site is built by Arg-104 and Arg-110. Residues Asn-117 and 140-142 (IAN) contribute to the NAD(+) site. Position 142 (Asn-142) interacts with substrate. Residue Lys-165 is modified to N6-acetyllysine. Residue Arg-176 coordinates substrate. Position 185 is an N6-acetyllysine; alternate (Lys-185). Lys-185 bears the N6-succinyllysine; alternate mark. Residue His-200 is the Proton acceptor of the active site. Lys-203 is subject to N6-succinyllysine. An N6-acetyllysine; alternate mark is found at Lys-215 and Lys-239. Residues Lys-215 and Lys-239 each carry the N6-succinyllysine; alternate modification. An N6-malonyllysine; alternate modification is found at Lys-239. Ser-246 carries the post-translational modification Phosphoserine. Met-251 is an NAD(+) binding site. Lys-269 bears the N6-succinyllysine mark. Lys-296, Lys-301, Lys-314, and Lys-324 each carry N6-acetyllysine; alternate. N6-succinyllysine; alternate is present on residues Lys-296, Lys-301, Lys-314, and Lys-324. Ser-326 bears the Phosphoserine mark. An N6-acetyllysine; alternate mark is found at Lys-328, Lys-329, and Lys-335. N6-succinyllysine; alternate is present on Lys-328. Lys-329 carries the post-translational modification N6-malonyllysine; alternate. Lys-335 is modified (N6-succinyllysine; alternate).

This sequence belongs to the LDH/MDH superfamily. MDH type 1 family. Homodimer. In terms of processing, acetylation is enhanced after treatment either with trichostin A (TCA) or with nicotinamide (NAM) with the appearance of tri- and tetraacetylations. Glucose also increases acetylation.

It is found in the mitochondrion matrix. The catalysed reaction is (S)-malate + NAD(+) = oxaloacetate + NADH + H(+). With respect to regulation, enzyme activity is enhanced by acetylation. This chain is Malate dehydrogenase, mitochondrial (MDH2), found in Macaca fascicularis (Crab-eating macaque).